We begin with the raw amino-acid sequence, 364 residues long: Nicotinate-nucleotide--dimethylbenzimidazole phosphoribosyltransferase (364 aa).

The active-site Proton acceptor is the Glu332.

The protein belongs to the CobT family.

It carries out the reaction 5,6-dimethylbenzimidazole + nicotinate beta-D-ribonucleotide = alpha-ribazole 5'-phosphate + nicotinate + H(+). The protein operates within nucleoside biosynthesis; alpha-ribazole biosynthesis; alpha-ribazole from 5,6-dimethylbenzimidazole: step 1/2. Its function is as follows. Catalyzes the synthesis of alpha-ribazole-5'-phosphate from nicotinate mononucleotide (NAMN) and 5,6-dimethylbenzimidazole (DMB). The chain is Nicotinate-nucleotide--dimethylbenzimidazole phosphoribosyltransferase from Salinispora tropica (strain ATCC BAA-916 / DSM 44818 / JCM 13857 / NBRC 105044 / CNB-440).